Consider the following 281-residue polypeptide: Putative zinc-binding protein ORF11 (281 aa).

The sequence is that of Putative zinc-binding protein ORF11 (ORF11) from Ictaluridae (bullhead catfishes).